Reading from the N-terminus, the 380-residue chain is NADPH quinone oxidoreductase (380 aa).

The N-terminal 17 residues, 1-17 (MSSFLSKRFISTTQRAM), are a transit peptide targeting the mitochondrion.

It belongs to the zinc-containing alcohol dehydrogenase family. Quinone oxidoreductase subfamily. In terms of assembly, homodimer.

Its subcellular location is the mitochondrion. It catalyses the reaction a quinone + NADH + H(+) = a quinol + NAD(+). It carries out the reaction a quinone + NADPH + H(+) = a quinol + NADP(+). In terms of biological role, NADPH quinone oxidoreductase that efficiently reduces 1,4-benzoquinone, whereas no activities are found for menadiones and methoxyquinones. This Kluyveromyces marxianus (Yeast) protein is NADPH quinone oxidoreductase.